We begin with the raw amino-acid sequence, 570 residues long: Proline--tRNA ligase (570 aa).

This sequence belongs to the class-II aminoacyl-tRNA synthetase family. ProS type 1 subfamily. As to quaternary structure, homodimer.

The protein localises to the cytoplasm. It carries out the reaction tRNA(Pro) + L-proline + ATP = L-prolyl-tRNA(Pro) + AMP + diphosphate. Functionally, catalyzes the attachment of proline to tRNA(Pro) in a two-step reaction: proline is first activated by ATP to form Pro-AMP and then transferred to the acceptor end of tRNA(Pro). As ProRS can inadvertently accommodate and process non-cognate amino acids such as alanine and cysteine, to avoid such errors it has two additional distinct editing activities against alanine. One activity is designated as 'pretransfer' editing and involves the tRNA(Pro)-independent hydrolysis of activated Ala-AMP. The other activity is designated 'posttransfer' editing and involves deacylation of mischarged Ala-tRNA(Pro). The misacylated Cys-tRNA(Pro) is not edited by ProRS. This is Proline--tRNA ligase from Neisseria meningitidis serogroup A / serotype 4A (strain DSM 15465 / Z2491).